Reading from the N-terminus, the 436-residue chain is Chorion-specific transcription factor GCMa (436 aa).

The GCM DNA-binding region spans 14–169 (LSWDINDMKL…KLEAEARRAM (156 aa)). Cysteine 76, cysteine 82, cysteine 86, cysteine 113, cysteine 116, cysteine 125, histidine 152, and histidine 154 together coordinate Zn(2+).

Polyubiquitinated in the presence of UBE2D2 and FBXW2 (in vitro).

It localises to the nucleus. Transcription factor involved in the control of expression of placental growth factor (PGF) and other placenta-specific genes. Binds to the trophoblast-specific element 2 (TSE2) of the aromatase gene enhancer. Binds to the SYDE1 promoter. Has a central role in mediating the differentiation of trophoblast cells along both the villous and extravillous pathways in placental development. The protein is Chorion-specific transcription factor GCMa (Gcm1) of Rattus norvegicus (Rat).